Here is a 274-residue protein sequence, read N- to C-terminus: Shikimate dehydrogenase (NADP(+)) (274 aa).

Shikimate contacts are provided by residues 15-17 (SKS) and T62. K66 serves as the catalytic Proton acceptor. An NADP(+)-binding site is contributed by D78. Positions 87 and 102 each coordinate shikimate. Residues 127–131 (GAGGA) and M215 contribute to the NADP(+) site. Y217 is a binding site for shikimate. G239 provides a ligand contact to NADP(+).

This sequence belongs to the shikimate dehydrogenase family. Homodimer.

It catalyses the reaction shikimate + NADP(+) = 3-dehydroshikimate + NADPH + H(+). It functions in the pathway metabolic intermediate biosynthesis; chorismate biosynthesis; chorismate from D-erythrose 4-phosphate and phosphoenolpyruvate: step 4/7. Functionally, involved in the biosynthesis of the chorismate, which leads to the biosynthesis of aromatic amino acids. Catalyzes the reversible NADPH linked reduction of 3-dehydroshikimate (DHSA) to yield shikimate (SA). This chain is Shikimate dehydrogenase (NADP(+)), found in Dechloromonas aromatica (strain RCB).